The sequence spans 127 residues: Fatty acid-binding protein, liver (127 aa).

Methionine 1 bears the N-acetylmethionine mark. Lysine 31 and lysine 36 each carry N6-succinyllysine. Serine 39 bears the Phosphoserine mark. N6-succinyllysine is present on lysine 46. At serine 56 the chain carries Phosphoserine. An N6-succinyllysine mark is found at lysine 57, lysine 78, and lysine 90. At serine 100 the chain carries Phosphoserine. Asparagine 105 is subject to Deamidated asparagine; alternate. The isoaspartyl glycine isopeptide (Asn-Gly); alternate cross-link spans asparagine 105–glycine 106. N6-succinyllysine is present on lysine 121.

Belongs to the calycin superfamily. Fatty-acid binding protein (FABP) family. In terms of assembly, monomer. Post-translationally, deamidation and transpeptidation at the beta carboxyl of Asn-105 forms an isoaspartyl residue and Edman degradation appears as though blocked. This rearrangement gives rise to an extra negative charge carried by the acid form.

It localises to the cytoplasm. Its function is as follows. Plays a role in lipoprotein-mediated cholesterol uptake in hepatocytes. Binds cholesterol. Binds free fatty acids and their coenzyme A derivatives, bilirubin, and some other small molecules in the cytoplasm. May be involved in intracellular lipid transport. The sequence is that of Fatty acid-binding protein, liver (FABP1) from Bos taurus (Bovine).